A 417-amino-acid chain; its full sequence is Calreticulin (417 aa).

The N-terminal stretch at 1–17 (MLLSVPLLLGLLGLAAA) is a signal peptide. An N-domain region spans residues 18–197 (EPAVYFKEQF…NSQVESGSLE (180 aa)). Glutamine 26 is a binding site for Ca(2+). Position 48 is an N6-acetyllysine (lysine 48). Ca(2+) is bound by residues lysine 62 and lysine 64. A disulfide bridge connects residues cysteine 105 and cysteine 137. Residues tyrosine 109, lysine 111, tyrosine 128, and aspartate 135 each coordinate an alpha-D-glucoside. Lysine 159 is modified (N6-acetyllysine). The 1-1 repeat unit spans residues 191 to 202 (VESGSLEDDWDF). A 4 X approximate repeats region spans residues 191 to 255 (VESGSLEDDW…DAKKPEDWDE (65 aa)). The disordered stretch occupies residues 193–278 (SGSLEDDWDF…PEYKGEWKPR (86 aa)). Residues 198–308 (DDWDFLPPKK…YSPDPSIYAY (111 aa)) are P-domain. A compositionally biased stretch (basic and acidic residues) spans 207-251 (KIKDPDASKPEDWDERAKIDDPTDSKPEDWDKPEHIPDPDAKKPE). Lysine 209 carries the post-translational modification N6-acetyllysine. 6 repeat units span residues 210–221 (DPDASKPEDWDE), 227–238 (DPTDSKPEDWDK), 244–255 (DPDAKKPEDWDE), 259–269 (GEWEPPVIQNP), 273–283 (GEWKPRQIDNP), and 287–297 (GTWIHPEIDNP). The interval 237–270 (DKPEHIPDPDAKKPEDWDEEMDGEWEPPVIQNPE) is interaction with PPIB. Positions 252-261 (DWDEEMDGEW) are enriched in acidic residues. A 3 X approximate repeats region spans residues 259–297 (GEWEPPVIQNPEYKGEWKPRQIDNPDYKGTWIHPEIDNP). Residues 309-417 (DNFGVLGLDL…DVPGQAKDEL (109 aa)) are C-domain. Aspartate 317 serves as a coordination point for an alpha-D-glucoside. A Ca(2+)-binding site is contributed by aspartate 328. A disordered region spans residues 350-417 (TKAAEKQMKD…DVPGQAKDEL (68 aa)). The segment covering 352–379 (AAEKQMKDKQDEEQRLKEEEEDKKRKEE) has biased composition (basic and acidic residues). Residues 380–409 (EEAEDKEDDEDKDEDEEDEEDKEEDEEEDV) show a composition bias toward acidic residues. The short motif at 414 to 417 (KDEL) is the Prevents secretion from ER element.

Belongs to the calreticulin family. In terms of assembly, monomer. Component of an EIF2 complex at least composed of CELF1/CUGBP1, CALR, CALR3, EIF2S1, EIF2S2, HSP90B1 and HSPA5. Interacts with PDIA3/ERp57 and SPACA9. Interacts with TRIM21. Interacts with NR3C1. Interacts with PPIB. Interacts (via P-domain) with PDIA5. Interacts with GABARAP. Interacts with CLCC1.

The protein localises to the endoplasmic reticulum lumen. It localises to the cytoplasm. It is found in the cytosol. Its subcellular location is the secreted. The protein resides in the extracellular space. The protein localises to the extracellular matrix. It localises to the cell surface. It is found in the sarcoplasmic reticulum lumen. Its subcellular location is the cytoplasmic vesicle. The protein resides in the secretory vesicle. The protein localises to the cortical granule. It localises to the cytoplasmic granule. Functionally, calcium-binding chaperone that promotes folding, oligomeric assembly and quality control in the endoplasmic reticulum (ER) via the calreticulin/calnexin cycle. This lectin interacts transiently with almost all of the monoglucosylated glycoproteins that are synthesized in the ER. Interacts with the DNA-binding domain of NR3C1 and mediates its nuclear export. Involved in maternal gene expression regulation. May participate in oocyte maturation via the regulation of calcium homeostasis. This Chlorocebus aethiops (Green monkey) protein is Calreticulin (CALR).